The following is a 333-amino-acid chain: MKLTIATALVGILLIACAHVANGSDCGCPKRTTPKPCTTARPTCAPVTTTTCRPPTTTRCPPPTTTRCPPPTRPAECTATTKRPTARPTTKRATTRRTTVRATTKRATTRRTTKRATTRRTTVRATTKRATTRRTTTKRAPTRRATTKRATTRRNPTRRTTTRRAPTKRATTKRATTRRNPTKRKTTRRTTVRATKTTKRATTKRAPTKRATTKRAPTKRATTKRAPTKRATTKRAPTKRATTKRAPTKRATTKRAPTKRATTKRAPTKRATTKRATARPTSKPCGCKPCGPGGEPCQGCAKRDALCQDLNNILRNLERKVRQCVCGEPQWLL.

Positions 1-23 (MKLTIATALVGILLIACAHVANG) are cleaved as a signal peptide. The tract at residues 51-285 (TCRPPTTTRC…ATARPTSKPC (235 aa)) is disordered. Residues 60–73 (CPPPTTTRCPPPTR) are compositionally biased toward pro residues. Positions 74 to 88 (PAECTATTKRPTARP) are enriched in low complexity. The span at 89 to 277 (TTKRATTRRT…TKRATTKRAT (189 aa)) shows a compositional bias: basic residues.

This is Salivary glue protein Sgs-3 (Sgs3) from Drosophila erecta (Fruit fly).